The sequence spans 5154 residues: Hydrocephalus-inducing protein (5154 aa).

Positions 409–800 (MILEDSVLDP…VLLSSPSPCG (392 aa)) are interaction with KIF9. Positions 997–1009 (RPKEKQSKKEPGK) are enriched in basic and acidic residues. Disordered regions lie at residues 997–1033 (RPKE…GNPV), 1966–1988 (ENEE…TSIS), 2193–2222 (ADSH…SPLL), 2383–2423 (KLQQ…QGAT), 2521–2572 (HTGT…KAER), and 2706–2762 (KAQE…DIDQ). The span at 1010–1024 (KGSTSSSRRQSKASQ) shows a compositional bias: low complexity. A coiled-coil region spans residues 1948 to 1977 (EMKKSKEEHMKAKYMENLENEEEEMNTSDQ). Polar residues-rich tracts occupy residues 1974 to 1988 (TSDQ…TSIS) and 2209 to 2220 (SETPQVQISSSP). Residues 2308 to 2444 (YVVMKAQEKA…LKMESIERKV (137 aa)) are a coiled coil. Basic and acidic residues-rich tracts occupy residues 2383-2398 (KLQQ…DELK), 2523-2535 (GTDE…DDQR), 2548-2572 (KDRE…KAER), and 2721-2734 (KLKD…ETQK). Positions 2543 to 2588 (GRKGRKDRERERLEKERAEKERLEREKAERERLEKLKALEERSDVE) form a coiled coil.

As to quaternary structure, interacts with KIF9. Expressed in brain and testis. Expressed in ciliated epithelial cells lining bronchi and oviduct, and in spermatocytes.

It is found in the cell projection. The protein localises to the cilium. The protein resides in the cytoplasm. It localises to the cytoskeleton. Its subcellular location is the cilium axoneme. It is found in the flagellum. Required for ciliary motility. The protein is Hydrocephalus-inducing protein (Hydin) of Mus musculus (Mouse).